Here is a 567-residue protein sequence, read N- to C-terminus: Urease subunit alpha (567 aa).

The region spanning 129-567 (GGIDAHIHFI…LPMAQRYFLF (439 aa)) is the Urease domain. The Ni(2+) site is built by His134, His136, and Lys217. Position 217 is an N6-carboxylysine (Lys217). His219 contributes to the substrate binding site. Ni(2+) is bound by residues His246 and His272. His320 (proton donor) is an active-site residue. Asp360 provides a ligand contact to Ni(2+).

It belongs to the metallo-dependent hydrolases superfamily. Urease alpha subunit family. Heterotrimer of UreA (gamma), UreB (beta) and UreC (alpha) subunits. Three heterotrimers associate to form the active enzyme. It depends on Ni cation as a cofactor. Carboxylation allows a single lysine to coordinate two nickel ions.

The protein localises to the cytoplasm. It catalyses the reaction urea + 2 H2O + H(+) = hydrogencarbonate + 2 NH4(+). It functions in the pathway nitrogen metabolism; urea degradation; CO(2) and NH(3) from urea (urease route): step 1/1. This chain is Urease subunit alpha, found in Teredinibacter turnerae (strain ATCC 39867 / T7901).